The chain runs to 808 residues: Protein translocase subunit SecA (808 aa).

Residues Gln-87, 105-109, and Asp-493 each bind ATP; that span reads GEGKT.

The protein belongs to the SecA family. In terms of assembly, monomer and homodimer. Part of the essential Sec protein translocation apparatus which comprises SecA, SecYEG and auxiliary proteins SecDF. Other proteins may also be involved.

It localises to the cell membrane. Its subcellular location is the cytoplasm. It carries out the reaction ATP + H2O + cellular proteinSide 1 = ADP + phosphate + cellular proteinSide 2.. In terms of biological role, part of the Sec protein translocase complex. Interacts with the SecYEG preprotein conducting channel. Has a central role in coupling the hydrolysis of ATP to the transfer of proteins into and across the cell membrane, serving as an ATP-driven molecular motor driving the stepwise translocation of polypeptide chains across the membrane. The sequence is that of Protein translocase subunit SecA from Mycoplasma pneumoniae (strain ATCC 29342 / M129 / Subtype 1) (Mycoplasmoides pneumoniae).